The primary structure comprises 323 residues: DNA-directed RNA polymerase subunit alpha (323 aa).

Residues 1-225 (MLDIAMPKIE…QYSQTIADFN (225 aa)) are alpha N-terminal domain (alpha-NTD). Residues 246-323 (IYDTPIEELD…SHAARAEIEG (78 aa)) are alpha C-terminal domain (alpha-CTD).

This sequence belongs to the RNA polymerase alpha chain family. Homodimer. The RNAP catalytic core consists of 2 alpha, 1 beta, 1 beta' and 1 omega subunit. When a sigma factor is associated with the core the holoenzyme is formed, which can initiate transcription.

It carries out the reaction RNA(n) + a ribonucleoside 5'-triphosphate = RNA(n+1) + diphosphate. DNA-dependent RNA polymerase catalyzes the transcription of DNA into RNA using the four ribonucleoside triphosphates as substrates. The sequence is that of DNA-directed RNA polymerase subunit alpha from Roseiflexus sp. (strain RS-1).